The sequence spans 247 residues: ATP synthase subunit a, chloroplastic (247 aa).

The next 5 membrane-spanning stretches (helical) occupy residues 38–58, 95–115, 134–154, 199–219, and 220–240; these read QVLI…IVTV, VPFI…GALL, INTT…AGLS, LVVV…VMFL, and GLFT…AYIG.

It belongs to the ATPase A chain family. As to quaternary structure, F-type ATPases have 2 components, CF(1) - the catalytic core - and CF(0) - the membrane proton channel. CF(1) has five subunits: alpha(3), beta(3), gamma(1), delta(1), epsilon(1). CF(0) has four main subunits: a, b, b' and c.

The protein resides in the plastid. Its subcellular location is the chloroplast thylakoid membrane. Its function is as follows. Key component of the proton channel; it plays a direct role in the translocation of protons across the membrane. In Populus alba (White poplar), this protein is ATP synthase subunit a, chloroplastic.